Reading from the N-terminus, the 2587-residue chain is Clavatol synthase claF (2587 aa).

An N-terminal acylcarrier protein transacylase domain (SAT) region spans residues 93-256 (LLSPLVVIVQ…TEVALSGRFH (164 aa)). Cys137 functions as the Nucleophile; for transacylase activity in the catalytic mechanism. Residue His256 is the Proton donor/acceptor; for transacylase activity of the active site. Residues 383-799 (DDQIAVIGMA…GSNASMIITQ (417 aa)) form the Ketosynthase family 3 (KS3) domain. Residues Cys548, His683, and His722 each act as for beta-ketoacyl synthase activity in the active site. The interval 912–1222 (CFGGQISTYV…ESLPLLAEAT (311 aa)) is malonyl-CoA:ACP transacylase (MAT) domain. The interval 1284-1416 (PKGLTTFIGF…GSIVFLPASD (133 aa)) is N-terminal hotdog fold. The PKS/mFAS DH domain occupies 1284 to 1595 (PKGLTTFIGF…YRLVPMDSMR (312 aa)). The segment at 1315–1593 (LTSANVALNT…ISYRLVPMDS (279 aa)) is product template (PT) domain. The segment at 1436 to 1595 (ASLLQGNGAD…YRLVPMDSMR (160 aa)) is C-terminal hotdog fold. Residues 1609 to 1635 (STAAVSSKSTPVHAPTPTTTVSSTPSS) form a disordered region. The segment covering 1617 to 1635 (STPVHAPTPTTTVSSTPSS) has biased composition (low complexity). The Carrier domain maps to 1654–1728 (PDISAKMCEI…SLVSCIRSTL (75 aa)). Residue Ser1688 is modified to O-(pantetheine 4'-phosphoryl)serine. Active-site for methyltransferase activity residues include Tyr1947, His2059, and Glu2085. Residues 1952 to 2126 (VNTVWIKQLE…ATYWEKVLQS (175 aa)) form a methyltransferase (CMeT) domain region. Residues 2208-2452 (SLSSGQCVLV…KILPELDGTL (245 aa)) form an NADPH-binding (R) domain region.

The cofactor is pantetheine 4'-phosphate.

It catalyses the reaction 3 malonyl-CoA + acetyl-CoA + AH2 + 2 S-adenosyl-L-methionine + H(+) = clavatol + A + 2 S-adenosyl-L-homocysteine + 3 CO2 + 4 CoA + H2O. The protein operates within secondary metabolite biosynthesis. Its function is as follows. Non-reducing polyketide synthase; part of the cla gene cluster that produces clavatol and ortho-quinone methide. The clavatol biosynthesis cluster cla and the terrestric acid cluster tra are both involved in the production of peniphenones and penilactones. The non-reducing PKS claF is responsible for the formation of clavatol from successive condensations of 3 malonyl-CoA units, presumably with a simple acetyl-CoA starter unit, and 2 methylation steps. The esterase claE probably collaborates with claF by catalyzing the hydrolysis of ACP-bound acyl intermediates to free the ACP from stalled intermediates. The clavatol oxidase claD then converts clavatol to hydroxyclavatol. Spontaneous dehydration of hydroxyclavatol leads to the accumulation of the highly active ortho-quinone methide. On the other hand, the PKS-NRPS hybrid traA is involved in the formation of crustosic acid, with the help of traB and traD. The polyketide synthase module (PKS) of traA is responsible for the synthesis of the polyketide backbone via the condensation of an acetyl-CoA starter unit with 3 malonyl-CoA units. The downstream nonribosomal peptide synthetase (NRPS) module then amidates the carboxyl end of the polyketide with L-malic acid. Because traA lacks a designated enoylreductase (ER) domain, the required activity is provided the enoyl reductase traG. Crustosic acid undergoes decarboxylation and isomerization to the terrestric acid, catalyzed by the 2-oxoglutarate-dependent dioxygenase traH. Both acids are further converted to the 2 gamma-butyrolactones (R)-5-methyltetronic acid and (S)-5-carboxylmethyltetronic acid, with involvement of the cytochrome P450 monooxygenase claJ. Spontaneous addition of the methide to these gamma-butyrolactones leads to peniphenone D and penilactone D, which undergo again stereospecific attacking by methide to give penilactones A and B. This Penicillium crustosum (Blue mold fungus) protein is Clavatol synthase claF.